A 424-amino-acid polypeptide reads, in one-letter code: MGCGTSKVLPEPPKDVQLDLVKKVEPFSGTKSDVYKHFITEVDSVGPLKGGFPAASQGANPSPGTPRTSHTEPPSEPPRRARVAKYRAKFDPRVTAKYDIKALIGRGSFSRVVRVEHRATRQPYAIKMIETKYREGREVCESELRVLRRVRHANIIQLVEVFETQERVYMVMELATGGELFDRIIAKGSFTERDATRVLQMVLDGVRYLHALGITHRDLKPENLLYYHPGTDSKIIITDFGLASARKKGDDCLMKTTCGTPEYIAPEVLVRKPYTNSVDMWALGVIAYILLSGTMPFEDDNRTRLYRQILRGKYSYSGEPWPSVSNLAKDFIDRLLTVDPGARMTALQALRHPWVVSMAASSSMKNLHRSISQNLLKRASSRCQSTKSAQSTRSSRSTRSNKSRRVRERELRELNLRYQQQYNG.

Glycine 2 is lipidated: N-myristoyl glycine. Cysteine 3 is lipidated: S-palmitoyl cysteine. The interval 49–81 (KGGFPAASQGANPSPGTPRTSHTEPPSEPPRRA) is disordered. The span at 57–72 (QGANPSPGTPRTSHTE) shows a compositional bias: polar residues. Residues 98–355 (YDIKALIGRG…ALQALRHPWV (258 aa)) form the Protein kinase domain. Residues 104–112 (IGRGSFSRV) and lysine 127 each bind ATP. Catalysis depends on aspartate 218, which acts as the Proton acceptor. Positions 378–407 (RASSRCQSTKSAQSTRSSRSTRSNKSRRVR) are disordered. Phosphoserine; by autocatalysis is present on residues serine 380 and serine 381. Over residues 385–398 (STKSAQSTRSSRST) the composition is skewed to low complexity.

It belongs to the protein kinase superfamily. CAMK Ser/Thr protein kinase family. In terms of assembly, homodimer. Post-translationally, autophosphorylated on serine residues. In terms of processing, myristoylated. Required for membrane association. Prerequisite for palmitoylation to occur. Palmitoylated.

It localises to the golgi apparatus. It is found in the cytoplasm. Its subcellular location is the cytoskeleton. The protein resides in the microtubule organizing center. The protein localises to the centrosome. It localises to the nucleus speckle. It is found in the endoplasmic reticulum membrane. Its subcellular location is the cell membrane. It carries out the reaction L-seryl-[protein] + ATP = O-phospho-L-seryl-[protein] + ADP + H(+). The catalysed reaction is L-threonyl-[protein] + ATP = O-phospho-L-threonyl-[protein] + ADP + H(+). Its activity is regulated as follows. Activity depends on Ca(2+) concentration. May be a SFC-associated serine kinase (splicing factor compartment-associated serine kinase) with a role in intranuclear SR protein (non-snRNP splicing factors containing a serine/arginine-rich domain) trafficking and pre-mRNA processing. The protein is Serine/threonine-protein kinase H1 (PSKH1) of Bos taurus (Bovine).